A 394-amino-acid polypeptide reads, in one-letter code: Chalcone synthase (394 aa).

Cys-168 is a catalytic residue.

Belongs to the thiolase-like superfamily. Chalcone/stilbene synthases family.

It catalyses the reaction (E)-4-coumaroyl-CoA + 3 malonyl-CoA + 3 H(+) = 2',4,4',6'-tetrahydroxychalcone + 3 CO2 + 4 CoA. Its pathway is secondary metabolite biosynthesis; flavonoid biosynthesis. The primary product of this enzyme is 4,2',4',6'-tetrahydroxychalcone (also termed naringenin-chalcone or chalcone) which can under specific conditions spontaneously isomerize into naringenin. This chain is Chalcone synthase (CHS), found in Raphanus sativus (Radish).